The following is a 295-amino-acid chain: Small ribosomal subunit protein uS2 (295 aa).

Serine 2 is modified (N-acetylserine). At serine 43 the chain carries Phosphoserine. Lysine 52 is subject to N6-acetyllysine. An interaction with PPP1R16B region spans residues 54–113 (TWEKLLLAARAIVAIENPADVSVISSRNTGQRAVLKFAAATGATPIAGRFTPGTFTNQIQ). At lysine 89 the chain carries N6-acetyllysine; alternate. Lysine 89 is covalently cross-linked (Glycyl lysine isopeptide (Lys-Gly) (interchain with G-Cter in SUMO2); alternate). Threonine 97 carries the phosphothreonine modification. Laminin-binding stretches follow at residues 161-180 (IPCNNKGAHSVGLMWWMLAR) and 205-229 (RDPEEIEKEEQAAAEKAVTKEEFQG). [DE]-W-[ST] repeat units lie at residues 230 to 232 (EWT), 247 to 249 (DWS), 266 to 268 (DWS), 275 to 277 (DWS), and 293 to 295 (EWS). A laminin-binding region spans residues 242–295 (QPEVADWSEGVQVPSVPIQQFPTEDWSAQPATEDWSAAPTAQATEWVGATTEWS). The interval 266-295 (DWSAQPATEDWSAAPTAQATEWVGATTEWS) is disordered.

It belongs to the universal ribosomal protein uS2 family. As to quaternary structure, monomer (37LRP) and homodimer (67LR). Component of the small ribosomal subunit. Mature ribosomes consist of a small (40S) and a large (60S) subunit. The 40S subunit contains about 33 different proteins and 1 molecule of RNA (18S). The 60S subunit contains about 49 different proteins and 3 molecules of RNA (28S, 5.8S and 5S). Interacts with RPS21. Interacts with several laminins including at least LAMB1. Interacts with MDK. Interacts with PRNP. The mature dimeric form interacts with PPP1R16B (via its fourth ankyrin repeat). Interacts with PPP1CA only in the presence of PPP1R16B. Acylated. Acylation may be a prerequisite for conversion of the monomeric 37 kDa laminin receptor precursor (37LRP) to the mature dimeric 67 kDa laminin receptor (67LR), and may provide a mechanism for membrane association. In terms of processing, cleaved by stromelysin-3 (ST3) at the cell surface. Cleavage by stromelysin-3 may be a mechanism to alter cell-extracellular matrix interactions.

The protein localises to the cell membrane. It localises to the cytoplasm. The protein resides in the nucleus. In terms of biological role, required for the assembly and/or stability of the 40S ribosomal subunit. Required for the processing of the 20S rRNA-precursor to mature 18S rRNA in a late step of the maturation of 40S ribosomal subunits. Also functions as a cell surface receptor for laminin. Plays a role in cell adhesion to the basement membrane and in the consequent activation of signaling transduction pathways. May play a role in cell fate determination and tissue morphogenesis. Also acts as a receptor for several other ligands, including the pathogenic prion protein, viruses, and bacteria. Acts as a PPP1R16B-dependent substrate of PPP1CA. Enables malignant tumor cells to penetrate laminin tissue and vessel barriers. Activates precursor thymic anti-OFA/iLRP specific cytotoxic T-cell. May induce CD8 T-suppressor cells secreting IL-10. The sequence is that of Small ribosomal subunit protein uS2 (Rpsa) from Mus musculus (Mouse).